The following is a 440-amino-acid chain: Chromosomal replication initiator protein DnaA (440 aa).

The domain I, interacts with DnaA modulators stretch occupies residues Met1–Asn74. Residues Asn74–Thr99 form a domain II region. Residues Ile100–Ala316 form a domain III, AAA+ region region. Gly146, Gly148, Lys149, and Thr150 together coordinate ATP. The domain IV, binds dsDNA stretch occupies residues Thr317–Ser440.

Belongs to the DnaA family. As to quaternary structure, oligomerizes as a right-handed, spiral filament on DNA at oriC.

It is found in the cytoplasm. In terms of biological role, plays an essential role in the initiation and regulation of chromosomal replication. ATP-DnaA binds to the origin of replication (oriC) to initiate formation of the DNA replication initiation complex once per cell cycle. Binds the DnaA box (a 9 base pair repeat at the origin) and separates the double-stranded (ds)DNA. Forms a right-handed helical filament on oriC DNA; dsDNA binds to the exterior of the filament while single-stranded (ss)DNA is stabiized in the filament's interior. The ATP-DnaA-oriC complex binds and stabilizes one strand of the AT-rich DNA unwinding element (DUE), permitting loading of DNA polymerase. After initiation quickly degrades to an ADP-DnaA complex that is not apt for DNA replication. Binds acidic phospholipids. The protein is Chromosomal replication initiator protein DnaA of Campylobacter jejuni subsp. jejuni serotype O:2 (strain ATCC 700819 / NCTC 11168).